The primary structure comprises 138 residues: Large ribosomal subunit protein uL16 (138 aa).

Over residues 1–13 (MLQPARRKYRKEQ) the composition is skewed to basic residues. The segment at 1–22 (MLQPARRKYRKEQKGRNTGVAT) is disordered.

This sequence belongs to the universal ribosomal protein uL16 family. As to quaternary structure, part of the 50S ribosomal subunit.

Functionally, binds 23S rRNA and is also seen to make contacts with the A and possibly P site tRNAs. This chain is Large ribosomal subunit protein uL16, found in Polaromonas sp. (strain JS666 / ATCC BAA-500).